Reading from the N-terminus, the 43-residue chain is Protein PsbN (43 aa).

A helical transmembrane segment spans residues 7–29 (VTIFLSGLLVSFTGYALYTAFGQ).

This sequence belongs to the PsbN family.

Its subcellular location is the plastid. The protein localises to the chloroplast thylakoid membrane. May play a role in photosystem I and II biogenesis. This chain is Protein PsbN, found in Ipomoea purpurea (Common morning glory).